Here is a 456-residue protein sequence, read N- to C-terminus: Methylenetetrahydrofolate--tRNA-(uracil-5-)-methyltransferase TrmFO (456 aa).

7 to 12 (GAGLAG) lines the FAD pocket.

It belongs to the MnmG family. TrmFO subfamily. The cofactor is FAD.

Its subcellular location is the cytoplasm. It catalyses the reaction uridine(54) in tRNA + (6R)-5,10-methylene-5,6,7,8-tetrahydrofolate + NADH + H(+) = 5-methyluridine(54) in tRNA + (6S)-5,6,7,8-tetrahydrofolate + NAD(+). The catalysed reaction is uridine(54) in tRNA + (6R)-5,10-methylene-5,6,7,8-tetrahydrofolate + NADPH + H(+) = 5-methyluridine(54) in tRNA + (6S)-5,6,7,8-tetrahydrofolate + NADP(+). Catalyzes the folate-dependent formation of 5-methyl-uridine at position 54 (M-5-U54) in all tRNAs. In Synechococcus sp. (strain RCC307), this protein is Methylenetetrahydrofolate--tRNA-(uracil-5-)-methyltransferase TrmFO.